The following is a 112-amino-acid chain: Small ribosomal subunit protein bS6 (112 aa).

It belongs to the bacterial ribosomal protein bS6 family.

Binds together with bS18 to 16S ribosomal RNA. The polypeptide is Small ribosomal subunit protein bS6 (rpsF) (Chlamydia muridarum (strain MoPn / Nigg)).